Here is a 250-residue protein sequence, read N- to C-terminus: Isoprenyl transferase (250 aa).

Residue Asp26 is part of the active site. Asp26 contributes to the Mg(2+) binding site. Substrate is bound by residues 27–30 (GNGR), Trp31, Arg39, His43, and 71–73 (STE). Asn74 (proton acceptor) is an active-site residue. Substrate contacts are provided by residues Trp75, Arg77, Arg198, and 204–206 (RLS). Position 217 (Glu217) interacts with Mg(2+).

This sequence belongs to the UPP synthase family. Homodimer. Mg(2+) is required as a cofactor.

Its function is as follows. Catalyzes the condensation of isopentenyl diphosphate (IPP) with allylic pyrophosphates generating different type of terpenoids. In Streptococcus agalactiae serotype V (strain ATCC BAA-611 / 2603 V/R), this protein is Isoprenyl transferase.